Consider the following 121-residue polypeptide: Large ribosomal subunit protein uL18 (121 aa).

Belongs to the universal ribosomal protein uL18 family. As to quaternary structure, part of the 50S ribosomal subunit; part of the 5S rRNA/L5/L18/L25 subcomplex. Contacts the 5S and 23S rRNAs.

This is one of the proteins that bind and probably mediate the attachment of the 5S RNA into the large ribosomal subunit, where it forms part of the central protuberance. The protein is Large ribosomal subunit protein uL18 of Burkholderia ambifaria (strain MC40-6).